A 378-amino-acid chain; its full sequence is MDQSDKNPNRRLRVIPKWSELCPDLLRSIFEQLSFTNLNRAKLVCRSWNSASRGCVPKRNQIPWMILFPQKSENNSSNNCVLFVPDDNDKVYKTRDLGVDFAQSICLATYGSWLLMFNHLRNLYILNPLTLERIDLPHSTSINPNMCYPNFKYYRSACLWINNITKDYLVVWPIYNKCFFTKKGDDTWRFAPACHIRMKDQIIYNHKDHKVYQYASYGFIYVWDFSSDIPHVDKHLPAVSFISGREIGDKNKYYRISHQMVMSLSGEVVVVKIMHYYDLSRWRFRIFELNPLTQRWVKVDSLGDAAIILDMGITVVAKDIPGIKKNSIYFSGLNHPLTDPECRFVYDLTTGTMEPLPQCVLSSMLFSDSRWFLPGFTS.

In terms of domain architecture, F-box spans 16 to 63 (PKWSELCPDLLRSIFEQLSFTNLNRAKLVCRSWNSASRGCVPKRNQIP).

This is Putative F-box protein At4g17565 from Arabidopsis thaliana (Mouse-ear cress).